Here is a 1745-residue protein sequence, read N- to C-terminus: Tight junction protein 1 (1745 aa).

The 88-residue stretch at 23 to 110 (TVTLHRAPGF…NAKITIRRKK (88 aa)) folds into the PDZ 1 domain. Residues 102–112 (AKITIRRKKKV) show a composition bias toward basic residues. The segment at 102–189 (AKITIRRKKK…QPAKPTKVTL (88 aa)) is disordered. The segment covering 123–136 (PVSDNEDDSYDEEV) has biased composition (acidic residues). Residue S125 is modified to Phosphoserine. Y132 carries the phosphotyrosine modification. The segment covering 149-175 (RRSEKSWARDRSASRERSLSPRSDRRS) has biased composition (basic and acidic residues). Phosphoserine is present on residues S175, S178, and S179. T185 is modified (phosphothreonine). Residues 186–264 (KVTLVKSRKN…KLKMVVQRDE (79 aa)) form the PDZ 2 domain. Phosphoserine is present on residues S212 and S241. T267 is modified (phosphothreonine). 13 positions are modified to phosphoserine: S275, S277, S280, S284, S290, S294, S297, S300, S323, S329, S334, S337, and S353. Positions 296–364 (ASDHSGRSHD…PVKHVDDHPP (69 aa)) are disordered. Residues 299 to 308 (HSGRSHDRPP) show a composition bias toward basic and acidic residues. Positions 325–338 (HSTQSPQQPSNGSL) are enriched in polar residues. At T354 the chain carries Phosphothreonine. The region spanning 421 to 502 (SMKLVKFRKG…GEEVTILAQK (82 aa)) is the PDZ 3 domain. Residues 516 to 584 (GDSFYIRTHF…PNKNRAEQLA (69 aa)) form the SH3 domain. A Guanylate kinase-like domain is found at 610-791 (SKRNLRKSRE…WYGALKEAIQ (182 aa)). Residues S617 and S622 each carry the phosphoserine modification. Residues 633–876 (YERVVLREAG…GTPPESAITR (244 aa)) are occludin (OCLN)-binding region. T809 is modified (phosphothreonine). Phosphoserine is present on residues S810 and S821. At Y822 the chain carries Phosphotyrosine. Phosphoserine is present on residues S824, S828, and S837. Disordered stretches follow at residues 825–944 (APGS…SASA) and 956–1042 (LEEP…YEPQ). Phosphothreonine occurs at positions 846, 848, 854, 861, and 868. The span at 879 to 892 (EPVREDSSGMHHEN) shows a compositional bias: basic and acidic residues. Residues 893 to 906 (QTYPPYSPQAQPQA) show a composition bias toward low complexity. At S912 the chain carries Phosphoserine. A compositionally biased stretch (basic and acidic residues) spans 998-1014 (DPAKVYRKEPYSEEMMR). S1071 is subject to Phosphoserine. The disordered stretch occupies residues 1090 to 1586 (QWSYYDDKQP…STQPPEFDSG (497 aa)). The span at 1106–1124 (ENQHPRDLDSRQHPEEASE) shows a compositional bias: basic and acidic residues. Phosphoserine is present on S1138. 2 positions are modified to phosphotyrosine: Y1139 and Y1164. The segment at 1150-1370 (RTSTLRHEEQ…FDRRSFESKP (221 aa)) is actin-binding region (ABR). 2 stretches are compositionally biased toward basic and acidic residues: residues 1268 to 1285 (KMFE…KDVN) and 1335 to 1346 (PPEDIVRSNHYD). Position 1353 is a phosphotyrosine (Y1353). At S1365 the chain carries Phosphoserine. Residues 1388–1399 (SQSQPNFSSYSS) are compositionally biased toward low complexity. Residues 1401-1418 (GKPETDAVDRSFSEKRYD) are compositionally biased toward basic and acidic residues. S1411 bears the Phosphoserine mark. Residues 1431 to 1445 (SQYSQPAPPLSSSSL) show a composition bias toward low complexity. Composition is skewed to polar residues over residues 1455–1468 (EGNS…NSYM) and 1510–1519 (AEQTQKTITP). Residues 1535–1544 (PFERKFESPK) show a composition bias toward basic and acidic residues. S1542 is subject to Phosphoserine. Polar residues predominate over residues 1561–1580 (SSKTPTSPKTLMKAHSSTQP). S1614 carries the phosphoserine modification. One can recognise a ZU5 domain in the interval 1631–1745 (ATARGIFNSN…NCVSVLIDHF (115 aa)).

Belongs to the MAGUK family. As to quaternary structure, homodimer. Forms heterodimers TJP3. Forms a heterodimer (via PDZ2 domain) with TJP2/ZO2 (via PDZ2 domain). Interacts with OCLN, CALM, claudins, CGN/cingulin, CXADR, GJD3 and UBN1. Interacts (via ZU5 domain) with CDC42BPB. Interacts (via PDZ domain) with GJA1. Interacts (via PDZ domains) with ANKRD2. Interacts with POPDC1 (via the C-terminus cytoplasmic tail). Interacts with GJA12 and KIRREL1. Interacts with HSPA4. Interacts (via ZU5 domain) with MYZAP. Interacts with DLL1. Interacts with USP53 (via the C-terminal region). Interacts with DNMBP (via C-terminal domain); required for the apical cell-cell junction localization of DNMBP. Interacts with SPEF1. Interacts (via N-terminus) with CTNNA1. Interacts with CLDN18. Interacts with CLDN16 (via TRV motif); this is a prerequisite for anchoring of CLDN16 at the tight junction. Interacts with PKP1; the interaction facilitates TJP1/ZO-1 localization to the plasma membrane. Interacts with PATJ (via PDZ1-6 domains); the interaction is required for attachment and extension of TJP1/ZO1 condensates along the apical cell interface. Phosphorylated at tyrosine redidues in response to epidermal growth factor (EGF). This response is dependent on an intact actin microfilament system. Dephosphorylated by PTPRJ. Expressed between ameloblasts, at ameloblast-ameloblast junctions and in the stratum intermedium during pre-secretory and secretory stages of tooth development (at protein level).

It localises to the cell membrane. The protein localises to the cell junction. The protein resides in the tight junction. It is found in the gap junction. Its subcellular location is the cytoplasm. It localises to the myofibril. The protein localises to the sarcomere. The protein resides in the i band. Its function is as follows. Tjp1, TjpP2, and Tjp3 are closely related scaffolding proteins that link tight junction (TJ) transmembrane proteins such as claudins, junctional adhesion molecules, and occludin to the actin cytoskeleton. Forms a multistranded TJP1/ZO1 condensate which elongates to form a tight junction belt, the belt is anchored at the apical cell membrane via interaction with PATJ. The tight junction acts to limit movement of substances through the paracellular space and as a boundary between the compositionally distinct apical and basolateral plasma membrane domains of epithelial and endothelial cells. Necessary for lumenogenesis, and particularly efficient epithelial polarization and barrier formation. Plays a role in the regulation of cell migration by targeting Cdc42bpb to the leading edge of migrating cells. Plays an important role in podosome formation and associated function, thus regulating cell adhesion and matrix remodeling. With Tjp2 and TJjp3, participates in the junctional retention and stability of the transcription factor Dbpa, but is not involved in its shuttling to the nucleus. May play a role in mediating cell morphology changes during ameloblast differentiation via its role in tight junctions. This is Tight junction protein 1 from Mus musculus (Mouse).